The primary structure comprises 252 residues: NLP effector protein Pc118356 (252 aa).

An N-terminal signal peptide occupies residues 1–17 (MALTVLAATALTALIMG). N-linked (GlcNAc...) asparagine glycans are attached at residues asparagine 20 and asparagine 67. Residues 121 to 127 (QDRHFWE) carry the Hepta-peptide GHRHDWE motif motif. An N-linked (GlcNAc...) asparagine glycan is attached at asparagine 166.

Belongs to the Necrosis inducing protein (NPP1) family.

It is found in the secreted. Secreted effector that contributes strongly to virulence during infection by P.capsici. This Phytophthora capsici protein is NLP effector protein Pc118356.